The sequence spans 90 residues: MKTAIFTVVLALAVFAVLSFGWEANEKALSEEFTELIHEKEAASETEARECRYFWGECHDHMPCCDWLVCRYKWPITYNIRVWNRTFPEK.

Positions 1–19 (MKTAIFTVVLALAVFAVLS) are cleaved as a signal peptide. A propeptide spanning residues 20–50 (FGWEANEKALSEEFTELIHEKEAASETEARE) is cleaved from the precursor. 2 disulfide bridges follow: cysteine 51/cysteine 65 and cysteine 58/cysteine 70.

Belongs to the neurotoxin 10 (Hwtx-1) family. 13 (Hntx-13) subfamily. As to expression, expressed by the venom gland.

Its subcellular location is the secreted. Its function is as follows. Ion channel inhibitor. This chain is U7-theraphotoxin-Hhn1k, found in Cyriopagopus hainanus (Chinese bird spider).